The sequence spans 71 residues: uncharacterized protein (71 aa).

2 consecutive transmembrane segments (helical) span residues 9–29 (FVIFSLFFTFISVSTFGNINF) and 41–61 (FVALFYIFTHTSFTSLCFFGL).

Its subcellular location is the membrane. This is an uncharacterized protein from Acheta domesticus (House cricket).